The primary structure comprises 527 residues: Optineurin (527 aa).

Disordered stretches follow at residues 1–32 (MSHQ…HPNL) and 101–143 (SHEN…KDQL). Residues 38 to 170 (EELLQQMKEL…VSELQLKLNS (133 aa)) are a coiled coil. Positions 58 to 209 (MKLNNQAMKG…GPTRTVSTSR (152 aa)) are interaction with Rab8. The short motif at 176–181 (DSFVEI) is the LIR element. Position 177 is a phosphoserine; by TBK1 (Ser177). The segment covering 186-197 (GEAEGSVKEIKH) has biased composition (basic and acidic residues). Disordered regions lie at residues 186–214 (GEAE…LSKY) and 262–292 (SDFE…EKGL). Ser198 carries the post-translational modification Phosphoserine. Polar residues predominate over residues 201 to 210 (PTRTVSTSRA). Positions 239–458 (CLREGNQKVE…LLKENDAFED (220 aa)) form a coiled coil. Basic and acidic residues-rich tracts occupy residues 262–274 (SDFE…RSEI) and 281–292 (STEKENDEEKGL). The segment at 361–527 (TRKESEKVDR…LQIHVMDCII (167 aa)) is interaction with HD. The interval 362–470 (RKESEKVDRA…RQSLMEMQSR (109 aa)) is interaction with MYO6. Positions 424-429 (DFHAER) match the UBAN motif. Phosphoserine is present on Ser476. A CCHC NOA-type zinc finger spans residues 497–527 (QRNIPIHSCPKCGEVLPDIDTLQIHVMDCII). The Zn(2+) site is built by Cys505, Cys508, His521, and Cys525.

As to quaternary structure, self-associates. Interacts with HD. Interacts with GTF3A. Interacts with MYO6. Interacts (via UBAN) with ubiquitinated TFRC. Interacts with GTP-bound Rab8 (RAB8A and/or RAB8B). Interacts with TBC1D17. Interacts with TBK1. Interacts with TRAF3. Binds to linear ubiquitin chains. Interacts with LC3 family members MAP1LC3A, MAP1LC3B, GABARAP, GABARAPL1 and GABARAPL2; OPTN phosphorylation increases the association (at least with MAP1LC3B). Interacts with RAB12; the interaction may be indirect. Interacts with TBK1; this interaction leads to the Golgi localization of TBK1 and its subsequent activation. Interacts with palmitoyltransferase ZDHHC17/HIP14; the interaction does not lead to palmitoylation of OPTN. Interacts with CYLD. Interacts with TOM1; the interaction is indirect and is mediated by MYO6, which acts as a bridge between TOM1 and OPTN. Interacts with USP12; the interaction is independent of USP12 deubiquitinase activity and may be involved in regulation of autophagic flux. In terms of processing, phosphorylated by TBK1, leading to restrict bacterial proliferation in case of infection.

Its subcellular location is the cytoplasm. It is found in the perinuclear region. The protein localises to the golgi apparatus. The protein resides in the trans-Golgi network. It localises to the cytoplasmic vesicle. Its subcellular location is the autophagosome. It is found in the recycling endosome. Its function is as follows. Plays an important role in the maintenance of the Golgi complex, in membrane trafficking, in exocytosis, through its interaction with myosin VI and Rab8. Links myosin VI to the Golgi complex and plays an important role in Golgi ribbon formation. Negatively regulates the induction of IFNB in response to RNA virus infection. Plays a neuroprotective role in the eye and optic nerve. Probably part of the TNF-alpha signaling pathway that can shift the equilibrium toward induction of cell death. May act by regulating membrane trafficking and cellular morphogenesis via a complex that contains Rab8 and huntingtin (HD). Mediates the interaction of Rab8 with the probable GTPase-activating protein TBC1D17 during Rab8-mediated endocytic trafficking, such as that of transferrin receptor (TFRC/TfR); regulates Rab8 recruitment to tubules emanating from the endocytic recycling compartment. Autophagy receptor that interacts directly with both the cargo to become degraded and an autophagy modifier of the MAP1 LC3 family; targets ubiquitin-coated bacteria (xenophagy) and appears to function in the same pathway as SQSTM1 and CALCOCO2/NDP52. This is Optineurin (OPTN) from Pongo abelii (Sumatran orangutan).